The sequence spans 368 residues: Aminomethyltransferase (368 aa).

Belongs to the GcvT family. The glycine cleavage system is composed of four proteins: P, T, L and H.

It carries out the reaction N(6)-[(R)-S(8)-aminomethyldihydrolipoyl]-L-lysyl-[protein] + (6S)-5,6,7,8-tetrahydrofolate = N(6)-[(R)-dihydrolipoyl]-L-lysyl-[protein] + (6R)-5,10-methylene-5,6,7,8-tetrahydrofolate + NH4(+). The glycine cleavage system catalyzes the degradation of glycine. This chain is Aminomethyltransferase, found in Alkaliphilus oremlandii (strain OhILAs) (Clostridium oremlandii (strain OhILAs)).